The chain runs to 478 residues: Phosphomannomutase (478 aa).

Residues 30 to 46 traverse the membrane as a helical segment; it reads FTPEVCARFTISFLTVM. Serine 111 acts as the Phosphoserine intermediate in catalysis. Mg(2+)-binding residues include serine 111, aspartate 245, aspartate 247, and aspartate 249. The chain crosses the membrane as a helical span at residues 265-284; sequence ILGLLCSLELAADAVAIPVS.

Belongs to the phosphohexose mutase family. It depends on Mg(2+) as a cofactor.

Its subcellular location is the cell membrane. The catalysed reaction is alpha-D-mannose 1-phosphate = D-mannose 6-phosphate. It participates in nucleotide-sugar biosynthesis; GDP-alpha-D-mannose biosynthesis; alpha-D-mannose 1-phosphate from D-fructose 6-phosphate: step 2/2. Its pathway is bacterial outer membrane biogenesis; LPS O-antigen biosynthesis. Involved in GDP-mannose biosynthesis which serves as the activated sugar nucleotide precursor for mannose residues in cell surface polysaccharides. This enzyme participates in synthesis of the LPS group C2 O antigen. The chain is Phosphomannomutase (manB) from Salmonella muenchen.